The following is a 119-amino-acid chain: NADH-quinone oxidoreductase subunit 7 (119 aa).

The next 3 membrane-spanning stretches (helical) occupy residues 11-31 (LIYV…GALL), 59-79 (VHFY…AFLW), and 88-108 (LGLY…VGFL).

It belongs to the complex I subunit 3 family. In terms of assembly, NDH-1 is composed of 15 different subunits, Nqo1 to Nqo15. The complex has a L-shaped structure, with the hydrophobic arm (subunits Nqo7, Nqo8 and Nqo10 to Nqo14) embedded in the membrane and the hydrophilic peripheral arm (subunits Nqo1 to Nqo6, Nqo9 and Nqo15) protruding into the bacterial cytoplasm. The hydrophilic domain contains all the redox centers.

It is found in the cell inner membrane. It catalyses the reaction a quinone + NADH + 5 H(+)(in) = a quinol + NAD(+) + 4 H(+)(out). NDH-1 shuttles electrons from NADH, via FMN and iron-sulfur (Fe-S) centers, to quinones in the respiratory chain. The immediate electron acceptor for the enzyme in this species is menaquinone. Couples the redox reaction to proton translocation (for every two electrons transferred, four hydrogen ions are translocated across the cytoplasmic membrane), and thus conserves the redox energy in a proton gradient required for the synthesis of ATP. This chain is NADH-quinone oxidoreductase subunit 7 (nqo7), found in Thermus thermophilus (strain ATCC 27634 / DSM 579 / HB8).